The sequence spans 390 residues: Aspartate beta-hydroxylase domain-containing protein 1 (390 aa).

Residues 1 to 54 (MKEGRGSFSVERGPRKERETAQSGMWKGNSPAGSQGAAMEGTGGELGGQGNWGP) form a disordered region. Topologically, residues 1–72 (MKEGRGSFSV…RASLIMLPWP (72 aa)) are cytoplasmic. Residues 41 to 51 (GTGGELGGQGN) are compositionally biased toward gly residues. Residues 73–95 (LPLASSALTLLFGALTSLFLWYC) traverse the membrane as a helical segment. The Lumenal segment spans residues 96–390 (YRLGSQDMQA…ALDFVFAPDP (295 aa)). The tract at residues 116 to 143 (RGGPVGCSEAGGPSPGGPGDPGEGPRTE) is disordered. Residues 128-137 (PSPGGPGDPG) are compositionally biased toward gly residues. Ser129 carries the phosphoserine modification.

Belongs to the aspartyl/asparaginyl beta-hydroxylase family.

The protein resides in the membrane. The chain is Aspartate beta-hydroxylase domain-containing protein 1 (ASPHD1) from Homo sapiens (Human).